Here is a 411-residue protein sequence, read N- to C-terminus: Metacaspase-1B (411 aa).

Residues 1–97 (MYHRHSAPPP…PPLEAQQFGN (97 aa)) are disordered. Pro residues predominate over residues 7-65 (APPPPGRSRGYPPPQQQWPPQPYQYLPYPPQGPPPAHTFPPPAHRSYPSPYPTPPPHSP). Active-site residues include His198 and Cys254.

It belongs to the peptidase C14B family.

In terms of biological role, involved in cell death (apoptosis). This Neosartorya fischeri (strain ATCC 1020 / DSM 3700 / CBS 544.65 / FGSC A1164 / JCM 1740 / NRRL 181 / WB 181) (Aspergillus fischerianus) protein is Metacaspase-1B (casB).